The chain runs to 81 residues: ATP synthase subunit C, plastid (81 aa).

The next 2 membrane-spanning stretches (helical) occupy residues 3-23 and 61-81; these read PLIPAASVIAAGLAVGLASIG and EALTIYGLVVALALSFANPFI.

This sequence belongs to the ATPase C chain family. F-type ATPases have 2 components, F(1) - the catalytic core - and F(0) - the membrane proton channel. F(1) has five subunits: alpha(3), beta(3), gamma(1), delta(1), epsilon(1). F(0) has four main subunits: a(1), b(1), b'(1) and c(10-14). The alpha and beta chains form an alternating ring which encloses part of the gamma chain. F(1) is attached to F(0) by a central stalk formed by the gamma and epsilon chains, while a peripheral stalk is formed by the delta, b and b' chains.

The protein resides in the plastid membrane. Its function is as follows. F(1)F(0) ATP synthase produces ATP from ADP in the presence of a proton or sodium gradient. F-type ATPases consist of two structural domains, F(1) containing the extramembraneous catalytic core and F(0) containing the membrane proton channel, linked together by a central stalk and a peripheral stalk. During catalysis, ATP synthesis in the catalytic domain of F(1) is coupled via a rotary mechanism of the central stalk subunits to proton translocation. Functionally, key component of the F(0) channel; it plays a direct role in translocation across the membrane. A homomeric c-ring of between 10-14 subunits forms the central stalk rotor element with the F(1) delta and epsilon subunits. This chain is ATP synthase subunit C, plastid, found in Aneura mirabilis (Parasitic liverwort).